A 360-amino-acid chain; its full sequence is Phenylalanine--tRNA ligase alpha subunit (360 aa).

Glu-260 provides a ligand contact to Mg(2+).

This sequence belongs to the class-II aminoacyl-tRNA synthetase family. Phe-tRNA synthetase alpha subunit type 1 subfamily. In terms of assembly, tetramer of two alpha and two beta subunits. Mg(2+) is required as a cofactor.

Its subcellular location is the cytoplasm. It catalyses the reaction tRNA(Phe) + L-phenylalanine + ATP = L-phenylalanyl-tRNA(Phe) + AMP + diphosphate + H(+). In Methylobacterium nodulans (strain LMG 21967 / CNCM I-2342 / ORS 2060), this protein is Phenylalanine--tRNA ligase alpha subunit.